The sequence spans 377 residues: 2-aminoethylphosphonate--pyruvate transaminase (377 aa).

Lys-194 is subject to N6-(pyridoxal phosphate)lysine.

This sequence belongs to the class-V pyridoxal-phosphate-dependent aminotransferase family. PhnW subfamily. In terms of assembly, homodimer. Requires pyridoxal 5'-phosphate as cofactor.

The enzyme catalyses (2-aminoethyl)phosphonate + pyruvate = phosphonoacetaldehyde + L-alanine. Involved in phosphonate degradation. The sequence is that of 2-aminoethylphosphonate--pyruvate transaminase from Cupriavidus necator (strain ATCC 17699 / DSM 428 / KCTC 22496 / NCIMB 10442 / H16 / Stanier 337) (Ralstonia eutropha).